The chain runs to 73 residues: Antimicrobial peptide lumbricin-PG (73 aa).

The first 14 residues, 1–14 (MLLTISDFLFLSLT), serve as a signal peptide directing secretion. Residues 25 to 48 (RPWSDRKNNYSGPQFTYPPEKAPP) form a disordered region.

It localises to the secreted. Its function is as follows. Displays antimicrobial activity against the Gram-positive bacterium S.aureus ATCC 2592, the Gram-negative bacteria E.coli ATCC 25922 and P.aeruginosa ATCC 27853, and the fungus C.albicans ATCC 2002. Displays stronger activity against P.aeruginosa and S.aureus than E.coli. Displays very weak hemolytic activity. This Metaphire guillelmi (Earthworm) protein is Antimicrobial peptide lumbricin-PG.